The chain runs to 129 residues: MNVEQIVEAIEKLTVAELAELVKALEEKFGVSAAAPIAVAAAAAPAAGAQQAQAEEKTEFDVLLKGFGSNKIGVIKVVREITGLGLKEAKDLVEKAGSPDAIVKSGIPKNEAEDIKKKLEEAGAEVTLK.

It belongs to the bacterial ribosomal protein bL12 family. As to quaternary structure, homodimer. Part of the ribosomal stalk of the 50S ribosomal subunit. Forms a multimeric L10(L12)X complex, where L10 forms an elongated spine to which 2 to 4 L12 dimers bind in a sequential fashion. Binds GTP-bound translation factors.

Its function is as follows. Forms part of the ribosomal stalk which helps the ribosome interact with GTP-bound translation factors. Is thus essential for accurate translation. The chain is Large ribosomal subunit protein bL12 from Pseudothermotoga lettingae (strain ATCC BAA-301 / DSM 14385 / NBRC 107922 / TMO) (Thermotoga lettingae).